The sequence spans 88 residues: Large ribosomal subunit protein bL31B (88 aa).

It belongs to the bacterial ribosomal protein bL31 family. Type B subfamily. Part of the 50S ribosomal subunit.

The sequence is that of Large ribosomal subunit protein bL31B from Glaesserella parasuis serovar 5 (strain SH0165) (Haemophilus parasuis).